Consider the following 1224-residue polypeptide: ATP-dependent helicase/deoxyribonuclease subunit B (1224 aa).

The region spanning 1–326 (MSLRFILGRA…VCAAANRRSE (326 aa)) is the UvrD-like helicase ATP-binding domain. 8–15 (GRAGTGKS) lines the ATP pocket. The UvrD-like helicase C-terminal domain occupies 283 to 584 (QSAPRFQHPE…KLSLIPPELD (302 aa)). 4 residues coordinate [4Fe-4S] cluster: Cys-841, Cys-1176, Cys-1179, and Cys-1185.

This sequence belongs to the helicase family. AddB/RexB type 1 subfamily. Heterodimer of AddA and AddB. Requires Mg(2+) as cofactor. The cofactor is [4Fe-4S] cluster.

Functionally, the heterodimer acts as both an ATP-dependent DNA helicase and an ATP-dependent, dual-direction single-stranded exonuclease. Recognizes the chi site generating a DNA molecule suitable for the initiation of homologous recombination. The AddB subunit has 5' -&gt; 3' nuclease activity but not helicase activity. The polypeptide is ATP-dependent helicase/deoxyribonuclease subunit B (Heliobacterium modesticaldum (strain ATCC 51547 / Ice1)).